A 287-amino-acid polypeptide reads, in one-letter code: Proteasome assembly chaperone 1 (287 aa).

The tract at residues 1–32 is disordered; sequence MATFFGEVQSVFSRAVDEDDEEEEGEEEEEDR. Residues 17-32 are compositionally biased toward acidic residues; sequence DEDDEEEEGEEEEEDR.

Belongs to the PSMG1 family. As to quaternary structure, forms a heterodimer with psmg2. In terms of processing, degraded by the proteasome upon completion of 20S proteasome maturation.

The protein localises to the cytoplasm. Its subcellular location is the endoplasmic reticulum. Its function is as follows. Chaperone protein which promotes assembly of the 20S proteasome as part of a heterodimer with psmg2. This is Proteasome assembly chaperone 1 from Xenopus tropicalis (Western clawed frog).